A 243-amino-acid chain; its full sequence is uncharacterized protein (243 aa).

It belongs to the mycobacterial PPE family.

It localises to the cell membrane. This is an uncharacterized protein from Mycobacterium tuberculosis (strain CDC 1551 / Oshkosh).